We begin with the raw amino-acid sequence, 600 residues long: 1,8-cineole synthase 1, chloroplastic (600 aa).

The N-terminal 31 residues, 1–31 (MATLRISSALIYQNTLTHHFRLRRPHRFVCK), are a transit peptide targeting the chloroplast. Asp342 is a binding site for dimethylallyl diphosphate. Mg(2+) is bound by residues Asp342 and Asp346. Residues 342 to 346 (DDIYD) carry the DDXXD motif motif. 3 residues coordinate dimethylallyl diphosphate: Glu420, Arg484, and Asn487. The Mg(2+) site is built by Asn487, Thr491, and Glu495.

It belongs to the terpene synthase family. Tpsb subfamily. Mg(2+) is required as a cofactor. Requires Mn(2+) as cofactor. In terms of tissue distribution, predominantly expressed in roots and at much lower levels in siliques. Not found in leaves, flowers or stems. Also detected in flowers in cv. Landsberg erecta. Not expressed in root apical meristem and elongation zone. Found in the vascular system of young roots and additionally in the cortex and epidermal cell layer of older roots.

It localises to the plastid. Its subcellular location is the chloroplast. It carries out the reaction (2E)-geranyl diphosphate + H2O = 1,8-cineole + diphosphate. Its pathway is secondary metabolite biosynthesis; terpenoid biosynthesis. In terms of biological role, involved in monoterpene (C10) biosynthesis. The major product is 1,8-cineole (52%) followed by minor amounts of sabinene (14.5%), myrcene (13.3%), (-)-(1S)-beta-pinene (7.8%), (-)-(4S)-limonene (4.0%), (E)-beta-ocimene (2.7%), alpha-terpineol (2.4%), (-)-(1S)-alpha-pinene (1.9%), terpinolene (0.8%), and (+)-alpha-thujene (0.6%). The chain is 1,8-cineole synthase 1, chloroplastic (TPS27) from Arabidopsis thaliana (Mouse-ear cress).